The primary structure comprises 127 residues: Protein ApaG (127 aa).

Residues 3-127 (DDPRYRVEVE…FVLSVPRTLH (125 aa)) form the ApaG domain.

This is Protein ApaG from Xanthomonas campestris pv. campestris (strain 8004).